The following is an 84-amino-acid chain: Large ribosomal subunit protein bL27 (84 aa).

The interval 1–21 (MAHKKGASSTRNGRDSNAQRL) is disordered. Residues 7–19 (ASSTRNGRDSNAQ) show a composition bias toward polar residues.

It belongs to the bacterial ribosomal protein bL27 family.

The polypeptide is Large ribosomal subunit protein bL27 (Clavibacter michiganensis subsp. michiganensis (strain NCPPB 382)).